The following is a 405-amino-acid chain: Proline-rich P65 protein (405 aa).

Residues 1 to 58 (MDINKPGWNQSDQQATAYDPNQQQYYGDGSTYYDPDQAVDPNQAYYPDPNTYPDAAAY) form a disordered region. Polar residues predominate over residues 7-25 (GWNQSDQQATAYDPNQQQY). A run of 12 repeats spans residues 40-45 (DPNQAY), 75-80 (DPNQAY), 83-87 (DPNAY), 89-93 (DPNAY), 95-99 (DPNAY), 101-105 (DPNAY), 107-111 (DPNAY), 119-123 (DPNAY), 140-145 (DPNQAY), 148-152 (DPNAY), 154-158 (DPNAY), and 168-172 (DPNAY). The segment at 40–172 (DPNQAYYPDP…YVTSTDPNAY (133 aa)) is 12 X 5 AA repeats of D-P-N-Q-A-Y.

In terms of processing, the N-terminus is blocked.

The protein resides in the cell membrane. The chain is Proline-rich P65 protein (p65) from Mycoplasma pneumoniae (strain ATCC 29342 / M129 / Subtype 1) (Mycoplasmoides pneumoniae).